The primary structure comprises 293 residues: MSAKIIDGKTIAQQVRNEVAALVQKRLAAGKRAPGLAVVLVGENPASQIYVASKRKACEEVGFVSRSYDLPMTTTEAELLALIDSLNNDSEIDGILVQLPLPAGIDNVKVLEHIHPDKDVDGFHPYNVGRLCQRAPKLRPCTPRGIVTLLERYDIPTYGLNAVVVGASNIVGRPMSLELLLAGCTTTVTHRFTKNLRQHVENADLLVVAVGKPGFIPGEWIKPGAIVIDVGINRLESGKVVGDVEFDVAVERAGWITPVPGGVGPMTVATLIQNTLQACEEYHDINENRVKGQ.

NADP(+) contacts are provided by residues 166–168 (GAS) and Ile232.

It belongs to the tetrahydrofolate dehydrogenase/cyclohydrolase family. As to quaternary structure, homodimer.

The catalysed reaction is (6R)-5,10-methylene-5,6,7,8-tetrahydrofolate + NADP(+) = (6R)-5,10-methenyltetrahydrofolate + NADPH. It carries out the reaction (6R)-5,10-methenyltetrahydrofolate + H2O = (6R)-10-formyltetrahydrofolate + H(+). It participates in one-carbon metabolism; tetrahydrofolate interconversion. Catalyzes the oxidation of 5,10-methylenetetrahydrofolate to 5,10-methenyltetrahydrofolate and then the hydrolysis of 5,10-methenyltetrahydrofolate to 10-formyltetrahydrofolate. This is Bifunctional protein FolD from Yersinia enterocolitica serotype O:8 / biotype 1B (strain NCTC 13174 / 8081).